Reading from the N-terminus, the 215-residue chain is Polysialic acid O-acetyltransferase (215 aa).

Acetyl-CoA-binding positions include 119 to 121, R148, K154, S166, 171 to 172, and K190; these read DMH and YK.

The protein belongs to the transferase hexapeptide repeat family. Homotrimer.

It catalyses the reaction [(2-&gt;6)-alpha-D-glucosyl-(1-&gt;4)-N-acetyl-alpha-D-neuraminosyl](n) + n acetyl-CoA = [(2-&gt;6)-alpha-D-glucosyl-(1-&gt;4)-N,7-O-diacetyl-alpha-D-neuraminosyl](n) + n CoA. It carries out the reaction [(2-&gt;6)-alpha-D-glucosyl-(1-&gt;4)-N-acetyl-alpha-D-neuraminosyl](n) + n acetyl-CoA = [(2-&gt;6)-alpha-D-glucosyl-(1-&gt;4)-N,O(9)-diacetyl-alpha-D-neuraminosyl](n) + n CoA. Functionally, catalyzes the O-acetylation of capsular polymeric sialic acid consisting of polymers of (2-&gt;6)-alpha-D-glucosyl-(1-&gt;4)-N-acetyl-alpha-D-neuraminosyl residues. Shows high substrate specificity toward polymers of sialic acid that contains a large number of residues. The polypeptide is Polysialic acid O-acetyltransferase (Neisseria meningitidis).